The chain runs to 787 residues: Integrin beta-6 (787 aa).

The N-terminal stretch at 1 to 21 is a signal peptide; sequence MGIELVCLFLLLLGRNDHVQG. Positions 22-71 constitute a PSI domain; the sequence is GCAWGGAESCSDCLLTGPHCAWCSQENFTHLSGAGERCDTPANLLAKGCQ. At 22-708 the chain is on the extracellular side; that stretch reads GCAWGGAESC…KDCPKPPNIP (687 aa). 19 cysteine pairs are disulfide-bonded: C23–C41, C31–C454, C34–C59, C44–C70, C197–C204, C252–C293, C394–C406, C426–C452, C456–C476, C467–C479, C481–C490, C492–C519, C502–C517, C511–C522, C524–C537, C539–C560, C544–C558, C552–C563, and C565–C574. N-linked (GlcNAc...) asparagine glycans are attached at residues N48 and N97. The VWFA domain maps to 131–371; it reads YPVDLYYLMD…QLIISAYEEL (241 aa). D140, S142, and S144 together coordinate Mg(2+). Ca(2+)-binding residues include S144, D147, D148, and E179. 4 residues coordinate Ca(2+): N235, D237, P239, and E240. A Mg(2+)-binding site is contributed by E240. N260 carries N-linked (GlcNAc...) asparagine glycosylation. Ca(2+) contacts are provided by D271 and K355. N-linked (GlcNAc...) asparagine glycosylation occurs at N387. N418 carries an N-linked (GlcNAc...) asparagine glycan. I-EGF domains lie at 456 to 491, 492 to 538, 539 to 575, and 576 to 615; these read CQRE…PHCE, CGED…PYCQ, CDNF…EYCN, and CTTN…PTCE. N-linked (GlcNAc...) asparagine glycans are attached at residues N463 and N471. N541 carries N-linked (GlcNAc...) asparagine glycosylation. The N-linked (GlcNAc...) asparagine glycan is linked to N575. Disulfide bonds link C576-C599, C583-C597, C591-C602, C604-C614, C617-C620, C624-C669, C630-C649, C633-C645, and C677-C701. Residues 709–729 traverse the membrane as a helical segment; that stretch reads MIMLGVSLAILLIGVVLLCIW. Positions 730 to 757 are interaction with HAX1; the sequence is KLLVSFHDRKEVAKFEAERSKAKWQTGT. Topologically, residues 730-787 are cytoplasmic; it reads KLLVSFHDRKEVAKFEAERSKAKWQTGTNPLYRGSTSTFKNVTYKHREKHKAGLSSDG.

This sequence belongs to the integrin beta chain family. In terms of assembly, heterodimer of an alpha and a beta subunit. Interacts with FLNB. Interacts with HAX1. ITGAV:ITGB6 interacts with FBN1. ITGAV:ITGB6 interacts with TGFB1.

The protein resides in the cell membrane. The protein localises to the cell junction. It localises to the focal adhesion. Functionally, integrin alpha-V:beta-6 (ITGAV:ITGB6) is a receptor for fibronectin and cytotactin. It recognizes the sequence R-G-D in its ligands. ITGAV:ITGB6 acts as a receptor for fibrillin-1 (FBN1) and mediates R-G-D-dependent cell adhesion to FBN1. Integrin alpha-V:beta-6 (ITGAV:ITGB6) mediates R-G-D-dependent release of transforming growth factor beta-1 (TGF-beta-1) from regulatory Latency-associated peptide (LAP), thereby playing a key role in TGF-beta-1 activation. This is Integrin beta-6 (Itgb6) from Mus musculus (Mouse).